Consider the following 383-residue polypeptide: Succinyl-diaminopimelate desuccinylase (383 aa).

His73 is a binding site for Zn(2+). Residue Asp75 is part of the active site. Asp107 is a Zn(2+) binding site. The Proton acceptor role is filled by Glu141. Residues Glu142, Glu170, and His356 each contribute to the Zn(2+) site.

It belongs to the peptidase M20A family. DapE subfamily. Homodimer. Requires Zn(2+) as cofactor. Co(2+) serves as cofactor.

It carries out the reaction N-succinyl-(2S,6S)-2,6-diaminopimelate + H2O = (2S,6S)-2,6-diaminopimelate + succinate. The protein operates within amino-acid biosynthesis; L-lysine biosynthesis via DAP pathway; LL-2,6-diaminopimelate from (S)-tetrahydrodipicolinate (succinylase route): step 3/3. In terms of biological role, catalyzes the hydrolysis of N-succinyl-L,L-diaminopimelic acid (SDAP), forming succinate and LL-2,6-diaminopimelate (DAP), an intermediate involved in the bacterial biosynthesis of lysine and meso-diaminopimelic acid, an essential component of bacterial cell walls. This chain is Succinyl-diaminopimelate desuccinylase, found in Pseudomonas aeruginosa (strain UCBPP-PA14).